A 223-amino-acid chain; its full sequence is uncharacterized protein (223 aa).

A mitochondrion-targeting transit peptide spans 1–12; it reads MFRSLVRKTTPL.

It localises to the mitochondrion. This is an uncharacterized protein from Candida albicans (strain WO-1) (Yeast).